An 837-amino-acid chain; its full sequence is Anaphase-promoting complex subunit 2 (837 aa).

Phosphoserine occurs at positions 233, 329, 485, 549, and 712. The interval 478 to 508 (CLETGQDSEDDSGEPEDWVPDPVDADPVKSS) is disordered. Residues 483–496 (QDSEDDSGEPEDWV) show a composition bias toward acidic residues. Tyr-825 carries the post-translational modification Phosphotyrosine.

It belongs to the cullin family. The mammalian APC/C is composed at least of 14 distinct subunits ANAPC1, ANAPC2, CDC27/APC3, ANAPC4, ANAPC5, CDC16/APC6, ANAPC7, CDC23/APC8, ANAPC10, ANAPC11, CDC26/APC12, ANAPC13, ANAPC15 and ANAPC16 that assemble into a complex of at least 19 chains with a combined molecular mass of around 1.2 MDa; APC/C interacts with FZR1 and FBXO5. In the context of the APC/C complex, directly interacts with UBE2C and UBE2S. Interacts (via cullin domain) with ANAPC11 and with UBCH10. Interacts with NEUROD2. Interacts with FBXO43; the interaction is direct.

Its pathway is protein modification; protein ubiquitination. Its function is as follows. Together with the RING-H2 protein ANAPC11, constitutes the catalytic component of the anaphase promoting complex/cyclosome (APC/C), a cell cycle-regulated E3 ubiquitin ligase that controls progression through mitosis and the G1 phase of the cell cycle. The APC/C complex acts by mediating ubiquitination and subsequent degradation of target proteins: it mainly mediates the formation of 'Lys-11'-linked polyubiquitin chains and, to a lower extent, the formation of 'Lys-48'- and 'Lys-63'-linked polyubiquitin chains. The APC/C complex catalyzes assembly of branched 'Lys-11'-/'Lys-48'-linked branched ubiquitin chains on target proteins. The CDC20-APC/C complex positively regulates the formation of synaptic vesicle clustering at active zone to the presynaptic membrane in postmitotic neurons. CDC20-APC/C-induced degradation of NEUROD2 drives presynaptic differentiation. The protein is Anaphase-promoting complex subunit 2 (Anapc2) of Mus musculus (Mouse).